The following is an 83-amino-acid chain: Kunitz serine protease inhibitor Pr-mulgin 2 (83 aa).

An N-terminal signal peptide occupies residues 1-24; it reads MSSGGLLLLLGLLTLWEGLTPVSS. The 51-residue stretch at 31-81 folds into the BPTI/Kunitz inhibitor domain; it reads CHLPHDPGPCKGNFQAFYYHPVRRTCLEFIYGGCQGNPNNFKTIDECKRTC. 3 disulfide bridges follow: cysteine 31-cysteine 81, cysteine 40-cysteine 64, and cysteine 56-cysteine 77.

This sequence belongs to the venom Kunitz-type family. In terms of tissue distribution, expressed by the venom gland.

The protein resides in the secreted. Functionally, serine protease inhibitor that acts against trypsin (EC(50)=10 nM, Ki=5nM), chymotrypsin (EC(50)=100 nM, Ki=40 nM), and plasmin (EC(50)=100 nM, Ki=40 nM). The polypeptide is Kunitz serine protease inhibitor Pr-mulgin 2 (Pseudechis rossignolii (Papuan pigmy mulga snake)).